The following is a 420-amino-acid chain: Bicoumarin synthase ktnC (420 aa).

Cys-362 contacts heme.

The protein belongs to the cytochrome P450 family. Heme serves as cofactor.

It catalyses the reaction 2 7-demethylsiderin + NADPH + O2 = orlandin + NADP(+) + 2 H2O. The protein operates within secondary metabolite biosynthesis. Its function is as follows. Non-reducing polyketide synthase; part of the gene cluster that mediates the biosynthesis of the bicoumarin kotanin. The non-reducing polyketide synthase ktnS first catalyzes the formation of the pentaketidic 4,7-dihydroxy-5-methylcoumarin from acetyl coenzyme A and 4 malonyl coenzyme A molecules. Further O-methylation by ktnB leads to the formation of 7-demethylsiderin. Then, an oxidative phenol coupling catalyzed by the cytochrome P450 monooxygenase ktnC forms the 8,8'-dimer P-orlandin via dimerization the monomeric precursor, 7-demethylsiderin. P-orlandin is subsequently O-methylated in a stepwise fashion to demethylkotanin and kotanin. This is Bicoumarin synthase ktnC from Aspergillus niger (strain ATCC MYA-4892 / CBS 513.88 / FGSC A1513).